The following is a 510-amino-acid chain: Light-independent protochlorophyllide reductase subunit B (510 aa).

Residue Asp-36 participates in [4Fe-4S] cluster binding. Residue Asp-297 is the Proton donor of the active site. A substrate-binding site is contributed by 432 to 433 (GM).

The protein belongs to the ChlB/BchB/BchZ family. As to quaternary structure, protochlorophyllide reductase is composed of three subunits; ChlL, ChlN and ChlB. Forms a heterotetramer of two ChlB and two ChlN subunits. It depends on [4Fe-4S] cluster as a cofactor.

It localises to the plastid. It is found in the chloroplast. The catalysed reaction is chlorophyllide a + oxidized 2[4Fe-4S]-[ferredoxin] + 2 ADP + 2 phosphate = protochlorophyllide a + reduced 2[4Fe-4S]-[ferredoxin] + 2 ATP + 2 H2O. It participates in porphyrin-containing compound metabolism; chlorophyll biosynthesis (light-independent). In terms of biological role, component of the dark-operative protochlorophyllide reductase (DPOR) that uses Mg-ATP and reduced ferredoxin to reduce ring D of protochlorophyllide (Pchlide) to form chlorophyllide a (Chlide). This reaction is light-independent. The NB-protein (ChlN-ChlB) is the catalytic component of the complex. This is Light-independent protochlorophyllide reductase subunit B from Pinus koraiensis (Korean pine).